A 148-amino-acid polypeptide reads, in one-letter code: Glutamate mutase sigma subunit 2 (148 aa).

A B12-binding domain is found at 1 to 134 (MRTVILGVIG…EALKADLGHR (134 aa)). Adenosylcob(III)alamin contacts are provided by residues 11-15 (SDAHV), histidine 14, 59-61 (SSL), and 90-94 (NLAVG). The span at 129–141 (ADLGHRSREEASS) shows a compositional bias: basic and acidic residues. The disordered stretch occupies residues 129–148 (ADLGHRSREEASSEKVQLGS).

It belongs to the methylaspartate mutase GlmS subunit family. In terms of assembly, heterotetramer composed of 2 epsilon subunits (GlmE) and 2 sigma subunits (GlmS). GlmE exists as a homodimer and GlmS as a monomer. The cofactor is adenosylcob(III)alamin.

The enzyme catalyses (2S,3S)-3-methyl-L-aspartate = L-glutamate. Its pathway is amino-acid degradation; L-glutamate degradation via mesaconate pathway; acetate and pyruvate from L-glutamate: step 1/4. Catalyzes the carbon skeleton rearrangement of L-glutamate to L-threo-3-methylaspartate ((2S,3S)-3-methylaspartate). This is Glutamate mutase sigma subunit 2 from Haloarcula marismortui (strain ATCC 43049 / DSM 3752 / JCM 8966 / VKM B-1809) (Halobacterium marismortui).